The sequence spans 367 residues: Heme A synthase (367 aa).

A run of 5 helical transmembrane segments spans residues 25–45 (ALRF…LVGG), 111–131 (LIAR…WLTG), 139–159 (WPLV…WWMV), 174–194 (LATH…IMRG), and 210–230 (GFAA…ALVA). Position 274 (His274) interacts with heme. The next 3 helical transmembrane spans lie at 276–296 (IGAY…LRAA), 305–325 (AVVL…TLLM), and 327–347 (VPLH…GFAI). Heme is bound at residue His335.

It belongs to the COX15/CtaA family. Type 2 subfamily. As to quaternary structure, interacts with CtaB. Requires heme b as cofactor.

It is found in the cell membrane. The enzyme catalyses Fe(II)-heme o + 2 A + H2O = Fe(II)-heme a + 2 AH2. It participates in porphyrin-containing compound metabolism; heme A biosynthesis; heme A from heme O: step 1/1. Its function is as follows. Catalyzes the conversion of heme O to heme A by two successive hydroxylations of the methyl group at C8. The first hydroxylation forms heme I, the second hydroxylation results in an unstable dihydroxymethyl group, which spontaneously dehydrates, resulting in the formyl group of heme A. This chain is Heme A synthase, found in Rhizobium leguminosarum bv. trifolii (strain WSM2304).